The primary structure comprises 886 residues: MRGFNLLLFWGCCVMHSWEGHIRPTRKPNTKGNNCRDSTLCPAYATCTNTVDSYYCACKQGFLSSNGQNHFKDPGVRCKDIDECSQSPQPCGPNSSCKNLSGRYKCSCLDGFSSPTGNDWVPGKPGNFSCTDINECLTSSVCPEHSDCVNSMGSYSCSCQVGFISRNSTCEDVDECADPRACPEHATCNNTVGNYSCFCNPGFESSSGHLSFQGLKASCEDIDECTEMCPINSTCTNTPGSYFCTCHPGFAPSNGQLNFTDQGVECRDIDECRQDPSTCGPNSICTNALGSYSCGCIAGFHPNPEGSQKDGNFSCQRVLFKCKEDVIPDNKQIQQCQEGTAVKPAYVSFCAQINNIFSVLDKVCENKTTVVSLKNTTESFVPVLKQISTWTKFTKEETSSLATVFLESVESMTLASFWKPSANITPAVRTEYLDIESKVINKECSEENVTLDLVAKGDKMKIGCSTIEESESTETTGVAFVSFVGMESVLNERFFKDHQAPLTTSEIKLKMNSRVVGGIMTGEKKDGFSDPIIYTLENIQPKQKFERPICVSWSTDVKGGRWTSFGCVILEASETYTICSCNQMANLAVIMASGELTMDFSLYIISHVGIIISLVCLVLAIATFLLCRSIRNHNTYLHLHLCVCLLLAKTLFLAGIHKTDNKMGCAIIAGFLHYLFLACFFWMLVEAVILFLMVRNLKVVNYFSSRNIKMLHICAFGYGLPMLVVVISASVQPQGYGMHNRCWLNTETGFIWSFLGPVCTVIVINSLLLTWTLWILRQRLSSVNAEVSTLKDTRLLTFKAFAQLFILGCSWVLGIFQIGPVAGVMAYLFTIINSLQGAFIFLIHCLLNGQVREEYKRWITGKTKPSSQSQTSRILLSSMPSASKTG.

Residues Met1 to Gly20 form the signal peptide. The Extracellular portion of the chain corresponds to His21 to Asp599. The EGF-like 1 domain maps to Lys31–Lys79. 18 disulfides stabilise this stretch: Cys35/Cys47, Cys41/Cys56, Cys58/Cys78, Cys84/Cys97, Cys91/Cys106, Cys108/Cys130, Cys136/Cys148, Cys142/Cys157, Cys159/Cys170, Cys176/Cys188, Cys182/Cys197, Cys199/Cys219, Cys225/Cys235, Cys229/Cys244, Cys246/Cys266, Cys272/Cys285, Cys279/Cys294, and Cys296/Cys315. The 52-residue stretch at Asp80 to Thr131 folds into the EGF-like 2; calcium-binding domain. 3 N-linked (GlcNAc...) asparagine glycosylation sites follow: Asn94, Asn99, and Asn127. Positions Asp132 to Glu171 constitute an EGF-like 3; calcium-binding domain. Asn167 carries N-linked (GlcNAc...) asparagine glycosylation. Residues Asp172–Glu220 form the EGF-like 4; calcium-binding domain. Asn189 and Asn194 each carry an N-linked (GlcNAc...) asparagine glycan. An EGF-like 5; calcium-binding domain is found at Asp221 to Arg267. 2 N-linked (GlcNAc...) asparagine glycosylation sites follow: Asn232 and Asn258. The 49-residue stretch at Asp268–Gln316 folds into the EGF-like 6; calcium-binding domain. N-linked (GlcNAc...) asparagine glycans are attached at residues Asn312, Asn366, Asn375, and Asn448. Residues Glu431–Thr597 enclose the GAIN-B domain. 2 disulfides stabilise this stretch: Cys550-Cys579 and Cys567-Cys581. The segment at Cys550–Thr597 is GPS. A helical membrane pass occupies residues Phe600–Cys627. The Cytoplasmic segment spans residues Arg628–Asn634. A helical membrane pass occupies residues Thr635 to Ile656. At His657 to Ala666 the chain is on the extracellular side. Residues Ile667 to Leu690 traverse the membrane as a helical segment. At Phe691–Lys709 the chain is on the cytoplasmic side. A helical membrane pass occupies residues Met710 to Val731. Topologically, residues Gln732–Glu747 are extracellular. A helical membrane pass occupies residues Thr748–Leu776. At Arg777–Arg794 the chain is on the cytoplasmic side. Residues Leu795–Gly814 form a helical membrane-spanning segment. The Extracellular segment spans residues Ile815–Phe829. The helical transmembrane segment at Thr830–Arg852 threads the bilayer. The Cytoplasmic segment spans residues Glu853–Gly886. Residues Lys862–Gly886 form a disordered region. The segment covering Thr863–Gly886 has biased composition (polar residues).

This sequence belongs to the G-protein coupled receptor 2 family. Adhesion G-protein coupled receptor (ADGR) subfamily. In terms of tissue distribution, expression is restricted to eosinophils.

The protein resides in the cell membrane. In terms of biological role, orphan receptor involved in cell adhesion and probably in cell-cell interactions specifically involving cells of the immune system. May play a role in regulatory T-cells (Treg) development. This is Adhesion G protein-coupled receptor E1 from Homo sapiens (Human).